A 456-amino-acid polypeptide reads, in one-letter code: Alcohol acyltransferase 17 (456 aa).

Residues histidine 166 and aspartate 382 each act as proton acceptor in the active site.

Belongs to the plant acyltransferase family. Expressed in fruit.

Functionally, involved in the biosynthesis of volatile esters which confer kiwifruit flavor. Alcohol acyl transferase that can use a wide range of alcohols as substrate to produce esters. This Actinidia deliciosa (Kiwi) protein is Alcohol acyltransferase 17.